A 197-amino-acid polypeptide reads, in one-letter code: Small ribosomal subunit protein uS4 (197 aa).

The S4 RNA-binding domain occupies 94–158 (RRLDNVIYRF…LKKYLYDYKN (65 aa)).

This sequence belongs to the universal ribosomal protein uS4 family. Part of the 30S ribosomal subunit. Contacts protein S5. The interaction surface between S4 and S5 is involved in control of translational fidelity.

Functionally, one of the primary rRNA binding proteins, it binds directly to 16S rRNA where it nucleates assembly of the body of the 30S subunit. With S5 and S12 plays an important role in translational accuracy. This is Small ribosomal subunit protein uS4 (rpsD) from Carsonella ruddii (strain PV).